Reading from the N-terminus, the 892-residue chain is MNDAECLSHLLQVCSRKTEEFVRTLDTKHMVWLLEIEEEARKMFSSDFNAEPELMPKTPSQKRRRKKRTSILPDENRDPSGRRISRRRSSANWSSSVRRLSVRNQIKANDDSIQEGPAQPKRMTRARAQASIMCPPAVEQALPESPSQLCQKSVQVKISEHERRSAEQKLRESEIEDSEMKTDVQPIPEITKDHISEIMNAAGPPPIPDIPAVPVTPENKSRAAGKLKISGSSTPIQTAAVVDLTCESPRPANELVNEQPLNLSNESATPTGSKSDRRSVRRSLVVRKSSSRRASLVSQFSLVSKRESMTREAVRKSIRQSISKKKAAMETSSTSSQRSCHSSIEMVDDEITIKIRPETAPSETVSEEAPAAESPRSSLRSRAFKKIAISNLSESEEPPRRVTRQMVAVDAEPTPETADDAQNNRRKSYKRAVDELSDDERPSEGECSPPRKKTPSPPCPPSKIVKPPPHMKSFLHTVQKNQFLMMTPGSIGKNITLKSFIKRNTPLKPDPKSEEKERQRLDALRKKEEAELQRKQKIEEGKKRKQEELKLRREDRLRKVLQARERVEQLEEEKKKKFEQKFAQIDEKSEKVREDRMAEEKAKKKTMVKKQEEVECRRKQEEEARKLKAKQMEEEERRHQELLQKKREEEEMERQKKMAEAKRLAEQERERQVFAEKERLRAERERERIEREKALQLQRELERAAQEKEQQRREAEERKKREQQQRLEQERLERLRTEQEVKRLQEEQQRKAKEQAAAAAAPVMNVTVDMQNSPACESYEMTPKSYKVPSVKANADNYGMDLNSDDSTDDESQPRKPIPAWASGNLLAQAVSQQYYKPIDADHMYGTIDSPKLEELFNKSKPRYFKRTSSAVWHSPPLSNRHHLAVGYGLKY.

Disordered stretches follow at residues 50–124 (AEPE…KRMT), 160–182 (EHER…EMKT), 255–286 (LVNE…SLVV), 305–470 (KRES…PPPH), 502–555 (KRNT…RRED), 569–687 (QLEE…RERE), 702–760 (ERAA…AAAA), and 797–819 (NYGM…KPIP). Residues 60 to 69 (SQKRRRKKRT) are compositionally biased toward basic residues. Residues 90-99 (SANWSSSVRR) show a composition bias toward low complexity. A compositionally biased stretch (polar residues) spans 259-272 (QPLNLSNESATPTG). A compositionally biased stretch (basic and acidic residues) spans 305–315 (KRESMTREAVR). Residues 316–326 (KSIRQSISKKK) show a composition bias toward basic residues. Residues 332–343 (SSTSSQRSCHSS) are compositionally biased toward low complexity. Positions 431 to 444 (RAVDELSDDERPSE) are enriched in basic and acidic residues. The span at 455-470 (PSPPCPPSKIVKPPPH) shows a compositional bias: pro residues. 4 stretches are compositionally biased toward basic and acidic residues: residues 509–555 (PDPK…RRED), 569–602 (QLEE…EEKA), 609–687 (KKQE…RERE), and 702–754 (ERAA…KAKE). The segment at 512–725 (KSEEKERQRL…EERKKREQQQ (214 aa)) is SAH. The tract at residues 802 to 876 (LNSDDSTDDE…RTSSAVWHSP (75 aa)) is IN box. Phosphoserine occurs at positions 869 and 870.

This sequence belongs to the INCENP family. In terms of assembly, component of the CPC at least composed of survivin/birc5, incenp, cdca8/borealin and/or cdca9/dasra-A, and aurkb/aurora-B. Interacts (via C-terminus) with aurkb (via N-terminus and kinase domain). Interacts (via N-terminus) with birc5.1, birc5.2, cdca8 and cdca9. Interacts with mtus1.

The protein resides in the nucleus. The protein localises to the chromosome. It localises to the centromere. It is found in the cytoplasm. Its subcellular location is the cytoskeleton. The protein resides in the spindle. The protein localises to the midbody. It localises to the kinetochore. In terms of biological role, component of the chromosomal passenger complex (CPC), a complex that acts as a key regulator of mitosis. The CPC complex has essential functions at the centromere in ensuring correct chromosome alignment and segregation and is required for chromatin-induced microtubule stabilization and spindle assembly. Acts as a scaffold regulating CPC localization and activity. The C-terminus associates with aurkb/aurora-B, the N-terminus associated with cdca8/borealin and/or cdca9/dasra-A tethers the CPC to the inner centromere, and the microtubule binding activity within the central SAH domain directs aurkb/aurora-B toward substrates near microtubules. Activates aurkb. The sequence is that of Inner centromere protein B (incenp-b) from Xenopus laevis (African clawed frog).